Reading from the N-terminus, the 431-residue chain is Protein S-Myc (431 aa).

Residue tyrosine 36 is modified to Phosphotyrosine; by Tyr-kinases. The region spanning 348–400 is the bHLH domain; sequence ERRRNHNRMERQRRDIMRSSFLNLRDLVPELVHNEKAAKVVILKKATEYIHTL. Residues 400-421 are leucine-zipper; that stretch reads LQADESKLLVERKKLYERQQQL.

As to quaternary structure, efficient DNA binding requires dimerization with another bHLH protein.

It localises to the nucleus. Its function is as follows. Has apoptosis-inducing activity. This Mus musculus (Mouse) protein is Protein S-Myc (Mycs).